Consider the following 338-residue polypeptide: Glycerol-3-phosphate dehydrogenase [NAD(P)+] (338 aa).

NADPH contacts are provided by W11, R30, and K109. K109, G143, and S145 together coordinate sn-glycerol 3-phosphate. An NADPH-binding site is contributed by A147. Residues K198, D251, S261, R262, and N263 each contribute to the sn-glycerol 3-phosphate site. The Proton acceptor role is filled by K198. R262 serves as a coordination point for NADPH. NADPH contacts are provided by V286 and E288.

It belongs to the NAD-dependent glycerol-3-phosphate dehydrogenase family.

The protein localises to the cytoplasm. The enzyme catalyses sn-glycerol 3-phosphate + NAD(+) = dihydroxyacetone phosphate + NADH + H(+). It carries out the reaction sn-glycerol 3-phosphate + NADP(+) = dihydroxyacetone phosphate + NADPH + H(+). Its pathway is membrane lipid metabolism; glycerophospholipid metabolism. Its function is as follows. Catalyzes the reduction of the glycolytic intermediate dihydroxyacetone phosphate (DHAP) to sn-glycerol 3-phosphate (G3P), the key precursor for phospholipid synthesis. The chain is Glycerol-3-phosphate dehydrogenase [NAD(P)+] from Cupriavidus necator (strain ATCC 17699 / DSM 428 / KCTC 22496 / NCIMB 10442 / H16 / Stanier 337) (Ralstonia eutropha).